Reading from the N-terminus, the 499-residue chain is uncharacterized protein (499 aa).

Transmembrane regions (helical) follow at residues 51 to 71 (LLFR…LVAF), 98 to 118 (IIAS…TLLM), 127 to 147 (LAFI…CHNF), 155 to 175 (LVLG…LTMI), 187 to 207 (YLFA…YAVL), 220 to 240 (WLFI…YFII), 301 to 321 (CLYG…YTSL), 325 to 345 (YMTI…SFLS), 352 to 372 (GIIL…LLAC), 378 to 398 (VLYF…GLNV), 412 to 432 (ATAI…AGQI), and 444 to 464 (LTSL…IFFL).

Belongs to the major facilitator superfamily. Allantoate permease family.

The protein resides in the golgi apparatus. The protein localises to the membrane. This is an uncharacterized protein from Schizosaccharomyces pombe (strain 972 / ATCC 24843) (Fission yeast).